Reading from the N-terminus, the 246-residue chain is UDP-N-acetyl-D-mannosaminuronic acid transferase (246 aa).

This sequence belongs to the glycosyltransferase 26 family.

The enzyme catalyses UDP-N-acetyl-alpha-D-mannosaminouronate + N-acetyl-alpha-D-glucosaminyl-di-trans,octa-cis-undecaprenyl diphosphate = beta-D-ManNAcA-(1-&gt;4)-alpha-D-GlcNAc-di-trans,octa-cis-undecaprenyl diphosphate + UDP + H(+). It functions in the pathway bacterial outer membrane biogenesis; enterobacterial common antigen biosynthesis. Its function is as follows. Catalyzes the synthesis of Und-PP-GlcNAc-ManNAcA (Lipid II), the second lipid-linked intermediate involved in enterobacterial common antigen (ECA) synthesis. The polypeptide is UDP-N-acetyl-D-mannosaminuronic acid transferase (Escherichia coli O6:K15:H31 (strain 536 / UPEC)).